Consider the following 122-residue polypeptide: uncharacterized protein (122 aa).

A run of 2 helical transmembrane segments spans residues Ile-34–Val-54 and Phe-91–Phe-111.

The protein localises to the cell membrane. This is an uncharacterized protein from Mycoplasma pneumoniae (strain ATCC 29342 / M129 / Subtype 1) (Mycoplasmoides pneumoniae).